Reading from the N-terminus, the 351-residue chain is Porphobilinogen deaminase (351 aa).

Cys-242 is modified (S-(dipyrrolylmethanemethyl)cysteine). The 50-residue stretch at 257-306 (PRHLSKLAYREVLEGNTEALATAAYKSNRTDASTGLTYKLPLEVEFGKVS) folds into the RPE1 insert domain.

This sequence belongs to the HMBS family. Monomer. Dipyrromethane is required as a cofactor.

It catalyses the reaction 4 porphobilinogen + H2O = hydroxymethylbilane + 4 NH4(+). The protein operates within porphyrin-containing compound metabolism; protoporphyrin-IX biosynthesis; coproporphyrinogen-III from 5-aminolevulinate: step 2/4. Its function is as follows. Tetrapolymerization of the monopyrrole PBG into the hydroxymethylbilane pre-uroporphyrinogen in several discrete steps. This chain is Porphobilinogen deaminase, found in Rickettsia conorii (strain ATCC VR-613 / Malish 7).